The primary structure comprises 42 residues: Photosystem II reaction center protein J (42 aa).

Residues 10-30 (IPLWLIGTVVGSLAIGLLAIF) traverse the membrane as a helical segment.

It belongs to the PsbJ family. In terms of assembly, PSII is composed of 1 copy each of membrane proteins PsbA, PsbB, PsbC, PsbD, PsbE, PsbF, PsbH, PsbI, PsbJ, PsbK, PsbL, PsbM, PsbT, PsbX, PsbY, PsbZ, Psb30/Ycf12, at least 3 peripheral proteins of the oxygen-evolving complex and a large number of cofactors. It forms dimeric complexes.

The protein resides in the plastid. It localises to the chloroplast thylakoid membrane. Functionally, one of the components of the core complex of photosystem II (PSII). PSII is a light-driven water:plastoquinone oxidoreductase that uses light energy to abstract electrons from H(2)O, generating O(2) and a proton gradient subsequently used for ATP formation. It consists of a core antenna complex that captures photons, and an electron transfer chain that converts photonic excitation into a charge separation. The protein is Photosystem II reaction center protein J of Stigeoclonium helveticum (Green alga).